The primary structure comprises 108 residues: Movement protein TGB2 (108 aa).

Over 1–8 (MPLTPPPN) the chain is Cytoplasmic. The helical transmembrane segment at 9–29 (YTGLYIAAALGVSLAAVVALF) threads the bilayer. The Lumenal portion of the chain corresponds to 30-72 (TRSTLPIVGDSQHNLPHGGRYRDGTKAIDYFKPTKLNSVEPGN). The helical transmembrane segment at 73–93 (YWYTQPWLLVILLVALICLSG) threads the bilayer. Over 94 to 108 (RHAQCCPRCNRVHSA) the chain is Cytoplasmic.

The protein belongs to the Tymovirales TGBp2 protein family.

Its subcellular location is the host endoplasmic reticulum membrane. In terms of biological role, plays a role in viral cell-to-cell propagation, by facilitating genome transport to neighboring plant cells through plasmosdesmata,. This chain is Movement protein TGB2, found in Solanum tuberosum (Potato).